The sequence spans 186 residues: Ribosome-recycling factor (186 aa).

Belongs to the RRF family.

Its subcellular location is the cytoplasm. Functionally, responsible for the release of ribosomes from messenger RNA at the termination of protein biosynthesis. May increase the efficiency of translation by recycling ribosomes from one round of translation to another. This is Ribosome-recycling factor from Polaromonas sp. (strain JS666 / ATCC BAA-500).